The following is a 60-amino-acid chain: MAVQQVKKSRSKRDIRRSHDSLTNPTLSTDKSTGELHLRHHVSPNGFYKGRKVVDTKSED.

The interval 1–60 (MAVQQVKKSRSKRDIRRSHDSLTNPTLSTDKSTGELHLRHHVSPNGFYKGRKVVDTKSED) is disordered. Residues 7–16 (KKSRSKRDIR) show a composition bias toward basic residues. The segment covering 22–31 (LTNPTLSTDK) has biased composition (polar residues).

Belongs to the bacterial ribosomal protein bL32 family.

In Francisella tularensis subsp. tularensis (strain SCHU S4 / Schu 4), this protein is Large ribosomal subunit protein bL32.